A 372-amino-acid chain; its full sequence is Transaldolase 2 (372 aa).

Lys140 (schiff-base intermediate with substrate) is an active-site residue.

The protein belongs to the transaldolase family. Type 2 subfamily.

Its subcellular location is the cytoplasm. It carries out the reaction D-sedoheptulose 7-phosphate + D-glyceraldehyde 3-phosphate = D-erythrose 4-phosphate + beta-D-fructose 6-phosphate. Its pathway is carbohydrate degradation; pentose phosphate pathway; D-glyceraldehyde 3-phosphate and beta-D-fructose 6-phosphate from D-ribose 5-phosphate and D-xylulose 5-phosphate (non-oxidative stage): step 2/3. Its function is as follows. Transaldolase is important for the balance of metabolites in the pentose-phosphate pathway. This chain is Transaldolase 2, found in Streptomyces avermitilis (strain ATCC 31267 / DSM 46492 / JCM 5070 / NBRC 14893 / NCIMB 12804 / NRRL 8165 / MA-4680).